The sequence spans 113 residues: Transmembrane protein 256 (113 aa).

Positions 1–29 (MAGVGAAFRRLGALSGAGALGLASYGAHG) are cleaved as a signal peptide. Over 30 to 63 (AQFPDAYGKELFDKANKHHFLHSLALLGVPSCRK) the chain is Extracellular. An N6-acetyllysine modification is found at Lys-43. Residues 64–84 (PVWAGLLLASGTTLFCTSFYY) form a helical membrane-spanning segment. Topologically, residues 85–92 (QALSGDTS) are cytoplasmic. The chain crosses the membrane as a helical span at residues 93–113 (IQTLGPVGGSLLILGWLALAF).

Belongs to the TMEM256 family.

It localises to the membrane. This Mus musculus (Mouse) protein is Transmembrane protein 256 (Tmem256).